Here is a 129-residue protein sequence, read N- to C-terminus: Defensin-like protein 182 (129 aa).

The N-terminal stretch at 1–26 (METVTSLVFIVNLLIIFTSVVNQARG) is a signal peptide. 8 disulfide bridges follow: Cys29/Cys70, Cys36/Cys55, Cys39/Cys64, Cys43/Cys66, Cys83/Cys129, Cys94/Cys114, Cys99/Cys123, and Cys103/Cys125.

The protein belongs to the DEFL family.

The protein localises to the secreted. Functionally, confers broad-spectrum resistance to pathogens. The polypeptide is Defensin-like protein 182 (PDF3.2) (Arabidopsis thaliana (Mouse-ear cress)).